A 434-amino-acid chain; its full sequence is Trigger factor (434 aa).

Positions 161–246 (EDRVTVDFSG…LKKVEERELP (86 aa)) constitute a PPIase FKBP-type domain.

Belongs to the FKBP-type PPIase family. Tig subfamily.

The protein resides in the cytoplasm. It catalyses the reaction [protein]-peptidylproline (omega=180) = [protein]-peptidylproline (omega=0). Involved in protein export. Acts as a chaperone by maintaining the newly synthesized protein in an open conformation. Functions as a peptidyl-prolyl cis-trans isomerase. The polypeptide is Trigger factor (Serratia proteamaculans (strain 568)).